Consider the following 360-residue polypeptide: Histidinol-phosphate aminotransferase (360 aa).

An N6-(pyridoxal phosphate)lysine modification is found at Lys-222.

This sequence belongs to the class-II pyridoxal-phosphate-dependent aminotransferase family. Histidinol-phosphate aminotransferase subfamily. It depends on pyridoxal 5'-phosphate as a cofactor.

The enzyme catalyses L-histidinol phosphate + 2-oxoglutarate = 3-(imidazol-4-yl)-2-oxopropyl phosphate + L-glutamate. It participates in amino-acid biosynthesis; L-histidine biosynthesis; L-histidine from 5-phospho-alpha-D-ribose 1-diphosphate: step 7/9. This chain is Histidinol-phosphate aminotransferase, found in Haloarcula marismortui (strain ATCC 43049 / DSM 3752 / JCM 8966 / VKM B-1809) (Halobacterium marismortui).